The primary structure comprises 1067 residues: Protein CLEC16A homolog (1067 aa).

Residues 50-199 (LRCIAEILIW…AVRTISLNVY (150 aa)) enclose the FPL domain. The helical transmembrane segment at 333–353 (SIVALFLLSLVFLVVSHAPLV) threads the bilayer. Residues 409–418 (SSSSYALSED) are compositionally biased toward low complexity. Disordered stretches follow at residues 409–434 (SSSSYALSEDSGVESSSPATTELDSQ), 837–861 (ASSSGGSGNSSGSSSRSSHHRPMFS), 876–993 (SNSA…SRSH), and 1037–1067 (QSSEETSFIGSDGNEATGGSEGRRRGAIETV). Polar residues predominate over residues 421 to 432 (VESSSPATTELD). Over residues 876 to 888 (SNSAGVSRTQMAP) the composition is skewed to polar residues. Residues 917–926 (RADHSDRERS) show a composition bias toward basic and acidic residues. Low complexity predominate over residues 927–947 (PSVSMGSHSSSQSRENSQPRS). Over residues 951 to 974 (RSRESSPRMPRPRSEEIPLEDFQH) the composition is skewed to basic and acidic residues. A compositionally biased stretch (polar residues) spans 975-993 (SRNNSPHSRGNPSPASRSH). Residues 1057–1067 (EGRRRGAIETV) are compositionally biased toward basic and acidic residues.

The protein belongs to the CLEC16A/gop-1 family. Interacts with the class C Vps-HOPS complex components; Car, Dor and Vps16a.

It localises to the cytoplasmic vesicle. The protein resides in the autophagosome membrane. Its subcellular location is the late endosome membrane. The protein localises to the golgi apparatus membrane. Required for mitophagy, autophagy and endosome maturation, possibly by acting in multiple membrane trafficking pathways. Required for endosome trafficking and maturation. Functions with the class C Vps-HOPS complex member Vps16a to promote endosomal maturation into degradative late endosomes and lysosomes. In response to starvation, functions at an early stage of autophagy to promote autophagosome growth and efficient autophagy. Essential for the recruitment of lva-positive Golgi elements to autophagosomes. Likely to function by promoting membrane traffic from the Golgi complex to the developing autophagosomes. Also regulates synaptic growth at the neuromuscular junctions (NMJ) by down-regulating BMP signaling. The sequence is that of Protein CLEC16A homolog from Drosophila melanogaster (Fruit fly).